Reading from the N-terminus, the 397-residue chain is Probable peptidoglycan glycosyltransferase FtsW (397 aa).

Topologically, residues 1 to 18 are cytoplasmic; the sequence is MSALTLTASKNTQTMTLD. A helical membrane pass occupies residues 19–39; the sequence is LPLLGSALALAAIGLIMVTSA. Residues 40-58 lie on the Periplasmic side of the membrane; sequence SVDFADDANGQALYYMWRH. A helical transmembrane segment spans residues 59–79; sequence LTYLLAGVAVGFVILRLPLEW. Over 80–83 the chain is Cytoplasmic; sequence WHKQ. Residues 84–104 form a helical membrane-spanning segment; sequence SWLLLVVALGFLVAVLIPGIG. The Periplasmic portion of the chain corresponds to 105–112; it reads RTVNGSTR. A helical transmembrane segment spans residues 113–133; that stretch reads WISLGVINIQASEIAKVCLAI. Residues 134 to 148 are Cytoplasmic-facing; that stretch reads YTASYLVRRLDEVRG. A helical membrane pass occupies residues 149 to 169; that stretch reads SWWGFAKPLLVLMLVALLLLM. Residues 170–172 are Periplasmic-facing; the sequence is EPD. The helical transmembrane segment at 173–193 threads the bilayer; sequence FGALVVTMCAVVGMIFLSGVA. The Cytoplasmic segment spans residues 194 to 196; that stretch reads LSR. A helical membrane pass occupies residues 197–217; the sequence is FAALLMFCVGSVALLAVSQPY. Over 218-272 the chain is Periplasmic; it reads RLKRLTAYTDPWADQFDSGYQLTQALIAFGRGEWSGVGLGNSVQKLFYLPEAHTD. A helical transmembrane segment spans residues 273 to 293; sequence FVFAIIAEELGLLGSLLIIVL. The Cytoplasmic segment spans residues 294–316; the sequence is FGVLLWRGMYVSRVAERAGQLFN. Residues 317 to 337 traverse the membrane as a helical segment; the sequence is AYAGYGVTLLLGGQALINLGV. The Periplasmic portion of the chain corresponds to 338–348; sequence NTGLLPTKGLT. The helical transmembrane segment at 349–369 threads the bilayer; it reads LPLISYGGSSLIISCLCVAIL. Topologically, residues 370-397 are cytoplasmic; it reads LRIGSEAVSGEQTEDESPKVKNRGGAQR.

Belongs to the SEDS family. FtsW subfamily.

Its subcellular location is the cell inner membrane. The enzyme catalyses [GlcNAc-(1-&gt;4)-Mur2Ac(oyl-L-Ala-gamma-D-Glu-L-Lys-D-Ala-D-Ala)](n)-di-trans,octa-cis-undecaprenyl diphosphate + beta-D-GlcNAc-(1-&gt;4)-Mur2Ac(oyl-L-Ala-gamma-D-Glu-L-Lys-D-Ala-D-Ala)-di-trans,octa-cis-undecaprenyl diphosphate = [GlcNAc-(1-&gt;4)-Mur2Ac(oyl-L-Ala-gamma-D-Glu-L-Lys-D-Ala-D-Ala)](n+1)-di-trans,octa-cis-undecaprenyl diphosphate + di-trans,octa-cis-undecaprenyl diphosphate + H(+). The protein operates within cell wall biogenesis; peptidoglycan biosynthesis. Functionally, peptidoglycan polymerase that is essential for cell division. The chain is Probable peptidoglycan glycosyltransferase FtsW from Hahella chejuensis (strain KCTC 2396).